Reading from the N-terminus, the 183-residue chain is Triggering receptor expressed on myeloid cells 3 (183 aa).

An N-terminal signal peptide occupies residues Met-1–Ala-19. Over Gly-20–Val-138 the chain is Extracellular. Residues Glu-30–Leu-128 enclose the Ig-like V-type domain. The N-linked (GlcNAc...) asparagine glycan is linked to Asn-33. A disulfide bridge connects residues Cys-38 and Cys-110. A helical transmembrane segment spans residues Ile-139–Phe-159. The Cytoplasmic portion of the chain corresponds to Leu-160 to Gln-183.

In terms of assembly, interacts with TYROBP/DAP12. As to expression, expressed in macrophages and in T-cells.

The protein resides in the cell membrane. In terms of biological role, forms a receptor signaling complex with TYROBP/DAP12 which mediates activation of macrophages as part of the innate immune response. The chain is Triggering receptor expressed on myeloid cells 3 from Mus musculus (Mouse).